Reading from the N-terminus, the 372-residue chain is Saccharopine dehydrogenase [NAD(+), L-lysine-forming] (372 aa).

2 residues coordinate L-saccharopine: arginine 18 and lysine 77. Catalysis depends on lysine 77, which acts as the Proton acceptor. Residue histidine 95 is the Proton donor of the active site. Glutamine 100 provides a ligand contact to L-saccharopine. NAD(+) is bound at residue arginine 129. The L-saccharopine site is built by arginine 130 and phenylalanine 134. Residues glycine 200 to arginine 201, aspartate 224, threonine 228, tyrosine 248, and valine 275 each bind NAD(+). Cysteine 202 and cysteine 246 are oxidised to a cystine. Residue serine 276–aspartate 278 coordinates L-saccharopine. NAD(+) is bound at residue isoleucine 316 to leucine 319.

Belongs to the AlaDH/PNT family. As to quaternary structure, monomer.

It carries out the reaction L-saccharopine + NAD(+) + H2O = L-lysine + 2-oxoglutarate + NADH + H(+). It functions in the pathway amino-acid biosynthesis; L-lysine biosynthesis via AAA pathway; L-lysine from L-alpha-aminoadipate (fungal route): step 3/3. Catalyzes the NAD(+)-dependent cleavage of saccharopine to L-lysine and 2-oxoglutarate, the final step in the alpha-aminoadipate (AAA) pathway for lysin biosynthesis. This Neurospora crassa (strain ATCC 24698 / 74-OR23-1A / CBS 708.71 / DSM 1257 / FGSC 987) protein is Saccharopine dehydrogenase [NAD(+), L-lysine-forming] (lys-4).